The chain runs to 235 residues: Purine nucleoside phosphorylase DeoD-type (235 aa).

Residue His-4 participates in a purine D-ribonucleoside binding. Phosphate-binding positions include Gly-20, Arg-24, Arg-43, and 87 to 90 (RVGT). A purine D-ribonucleoside-binding positions include 179-181 (EME) and 203-204 (SD). Asp-204 serves as the catalytic Proton donor.

This sequence belongs to the PNP/UDP phosphorylase family. Homohexamer; trimer of homodimers.

The catalysed reaction is a purine D-ribonucleoside + phosphate = a purine nucleobase + alpha-D-ribose 1-phosphate. It catalyses the reaction a purine 2'-deoxy-D-ribonucleoside + phosphate = a purine nucleobase + 2-deoxy-alpha-D-ribose 1-phosphate. In terms of biological role, catalyzes the reversible phosphorolytic breakdown of the N-glycosidic bond in the beta-(deoxy)ribonucleoside molecules, with the formation of the corresponding free purine bases and pentose-1-phosphate. This chain is Purine nucleoside phosphorylase DeoD-type, found in Exiguobacterium sibiricum (strain DSM 17290 / CCUG 55495 / CIP 109462 / JCM 13490 / 255-15).